The chain runs to 426 residues: Meiotically up-regulated gene 170 protein (426 aa).

This sequence belongs to the arrestin family.

The protein resides in the cytoplasm. It localises to the nucleus. Its function is as follows. Has a role in meiosis. The sequence is that of Meiotically up-regulated gene 170 protein (mug170) from Schizosaccharomyces pombe (strain 972 / ATCC 24843) (Fission yeast).